The following is a 529-amino-acid chain: Bifunctional purine biosynthesis protein PurH (529 aa).

The MGS-like domain occupies Met1–Val148.

It belongs to the PurH family.

It catalyses the reaction (6R)-10-formyltetrahydrofolate + 5-amino-1-(5-phospho-beta-D-ribosyl)imidazole-4-carboxamide = 5-formamido-1-(5-phospho-D-ribosyl)imidazole-4-carboxamide + (6S)-5,6,7,8-tetrahydrofolate. The catalysed reaction is IMP + H2O = 5-formamido-1-(5-phospho-D-ribosyl)imidazole-4-carboxamide. It functions in the pathway purine metabolism; IMP biosynthesis via de novo pathway; 5-formamido-1-(5-phospho-D-ribosyl)imidazole-4-carboxamide from 5-amino-1-(5-phospho-D-ribosyl)imidazole-4-carboxamide (10-formyl THF route): step 1/1. The protein operates within purine metabolism; IMP biosynthesis via de novo pathway; IMP from 5-formamido-1-(5-phospho-D-ribosyl)imidazole-4-carboxamide: step 1/1. The sequence is that of Bifunctional purine biosynthesis protein PurH from Shewanella piezotolerans (strain WP3 / JCM 13877).